Consider the following 409-residue polypeptide: Tryptophan synthase beta chain (409 aa).

Position 98 is an N6-(pyridoxal phosphate)lysine (Lys-98).

This sequence belongs to the TrpB family. Tetramer of two alpha and two beta chains. Requires pyridoxal 5'-phosphate as cofactor.

The catalysed reaction is (1S,2R)-1-C-(indol-3-yl)glycerol 3-phosphate + L-serine = D-glyceraldehyde 3-phosphate + L-tryptophan + H2O. The protein operates within amino-acid biosynthesis; L-tryptophan biosynthesis; L-tryptophan from chorismate: step 5/5. The beta subunit is responsible for the synthesis of L-tryptophan from indole and L-serine. The sequence is that of Tryptophan synthase beta chain (trpB) from Cereibacter sphaeroides (strain ATCC 17023 / DSM 158 / JCM 6121 / CCUG 31486 / LMG 2827 / NBRC 12203 / NCIMB 8253 / ATH 2.4.1.) (Rhodobacter sphaeroides).